We begin with the raw amino-acid sequence, 590 residues long: Aspartate--tRNA(Asp/Asn) ligase (590 aa).

Glutamate 172 serves as a coordination point for L-aspartate. An aspartate region spans residues 196–199 (QLFK). L-aspartate is bound at residue arginine 218. ATP is bound by residues 218 to 220 (RDE) and glutamine 227. Histidine 449 is a binding site for L-aspartate. Glutamate 484 is a binding site for ATP. Arginine 491 serves as a coordination point for L-aspartate. 536–539 (GIDR) is a binding site for ATP.

This sequence belongs to the class-II aminoacyl-tRNA synthetase family. Type 1 subfamily. In terms of assembly, homodimer.

The protein resides in the cytoplasm. It carries out the reaction tRNA(Asx) + L-aspartate + ATP = L-aspartyl-tRNA(Asx) + AMP + diphosphate. Functionally, aspartyl-tRNA synthetase with relaxed tRNA specificity since it is able to aspartylate not only its cognate tRNA(Asp) but also tRNA(Asn). Reaction proceeds in two steps: L-aspartate is first activated by ATP to form Asp-AMP and then transferred to the acceptor end of tRNA(Asp/Asn). The protein is Aspartate--tRNA(Asp/Asn) ligase of Francisella tularensis subsp. tularensis (strain SCHU S4 / Schu 4).